Here is a 157-residue protein sequence, read N- to C-terminus: Peptide methionine sulfoxide reductase MsrA (157 aa).

C13 is an active-site residue.

It belongs to the MsrA Met sulfoxide reductase family.

The enzyme catalyses L-methionyl-[protein] + [thioredoxin]-disulfide + H2O = L-methionyl-(S)-S-oxide-[protein] + [thioredoxin]-dithiol. The catalysed reaction is [thioredoxin]-disulfide + L-methionine + H2O = L-methionine (S)-S-oxide + [thioredoxin]-dithiol. In terms of biological role, has an important function as a repair enzyme for proteins that have been inactivated by oxidation. Catalyzes the reversible oxidation-reduction of methionine sulfoxide in proteins to methionine. This is Peptide methionine sulfoxide reductase MsrA from Methanococcus maripaludis (strain C6 / ATCC BAA-1332).